A 266-amino-acid chain; its full sequence is MDSLLNSITIDPAERRKTQNRLAKRKSRIHAGKQQGAMEAANALVGRQPTSVFTSTQQTIKGITSMNGSAEPPNGAVRLIQTASPLNEAAEDYSHTTSASSSSTMGTSLQTWHSHVSSDEITYTGQDMNLYPSSIFTNLSPGSSSSLSMQDSNVILCSPMTSPMTRHVMPSCSKDNYGVQRSKPGSPLHIASAMGHLKVVKTLITYGANVNEVDAAGYSPIHYATRNNHTAIVALLLEKGADWSYNVRSIDTSSGLAEALIHIIET.

The disordered stretch occupies residues 17-36; it reads KTQNRLAKRKSRIHAGKQQG. The span at 18 to 31 shows a compositional bias: basic residues; that stretch reads TQNRLAKRKSRIHA. ANK repeat units follow at residues 183–212 and 216–245; these read KPGS…NVNE and AGYS…DWSY.

It localises to the nucleus. In terms of biological role, transcription regulator; part of the Fg3_54/C64 gene cluster that mediates the biosynthesis of the octapeptide fusaoctaxin A, a virulence factor that is required for cell-to-cell invasiveness of plant host. Positively regulates the expression the Fg3_54/C64 gene cluster. The protein is Transcription regulator FGM4 of Gibberella zeae (strain ATCC MYA-4620 / CBS 123657 / FGSC 9075 / NRRL 31084 / PH-1) (Wheat head blight fungus).